The sequence spans 160 residues: Keratin-associated protein 13-4 (160 aa).

A run of 4 repeats spans residues 41 to 50 (CQLRSSLYRD), 51 to 60 (CQKTCWEPAS), 61 to 70 (CQKSCYRPRT), and 77 to 86 (CQTTCSGSLG). The 4 X 10 AA approximate repeats stretch occupies residues 41 to 86 (CQLRSSLYRDCQKTCWEPASCQKSCYRPRTSILCCPCQTTCSGSLG).

This sequence belongs to the PMG family. Interacts with hair keratins.

Its function is as follows. In the hair cortex, hair keratin intermediate filaments are embedded in an interfilamentous matrix, consisting of hair keratin-associated proteins (KRTAP), which are essential for the formation of a rigid and resistant hair shaft through their extensive disulfide bond cross-linking with abundant cysteine residues of hair keratins. The matrix proteins include the high-sulfur and high-glycine-tyrosine keratins. The sequence is that of Keratin-associated protein 13-4 (KRTAP13-4) from Homo sapiens (Human).